The chain runs to 1039 residues: Antigenic heat-stable 120 kDa protein (1039 aa).

Disordered regions lie at residues 1–115 (MSKD…TSDP), 408–438 (SSIETPTTTQVPPITPANQPLQPETSQMPQP), and 1020–1039 (QSENLNKSTPIKRESSFPPR). Residues 31-44 (PISSTANKDGNPDT) are compositionally biased toward polar residues. Positions 54-69 (EYTEEQKQKLEQEQKE) are enriched in basic and acidic residues. Positions 85-114 (FSFTPASSTQSTPSISSLSGGISSDSQTSD) are enriched in low complexity. Polar residues predominate over residues 424-438 (ANQPLQPETSQMPQP). Residues 1030-1039 (IKRESSFPPR) are compositionally biased toward basic and acidic residues.

The protein resides in the cytoplasm. The protein is Antigenic heat-stable 120 kDa protein (sca4) of Rickettsia felis (strain ATCC VR-1525 / URRWXCal2) (Rickettsia azadi).